Consider the following 156-residue polypeptide: Large ribosomal subunit protein uL15 (156 aa).

A disordered region spans residues 25–48; it reads RGIGCGKGKTSGRGHKGQKARSGV. Positions 34–43 are enriched in basic residues; the sequence is TSGRGHKGQK.

Belongs to the universal ribosomal protein uL15 family. As to quaternary structure, part of the 50S ribosomal subunit.

Its function is as follows. Binds to the 23S rRNA. The polypeptide is Large ribosomal subunit protein uL15 (Wolbachia pipientis subsp. Culex pipiens (strain wPip)).